The primary structure comprises 153 residues: Large ribosomal subunit protein uL13 (153 aa).

The protein belongs to the universal ribosomal protein uL13 family. Part of the 50S ribosomal subunit.

Functionally, this protein is one of the early assembly proteins of the 50S ribosomal subunit, although it is not seen to bind rRNA by itself. It is important during the early stages of 50S assembly. This Chelativorans sp. (strain BNC1) protein is Large ribosomal subunit protein uL13.